We begin with the raw amino-acid sequence, 552 residues long: FERRY endosomal RAB5 effector complex subunit 3 (552 aa).

S79 is modified (phosphoserine).

In terms of assembly, component of the FERRY complex composed of five subunits, TBCK, PPP1R21, FERRY3, CRYZL1 and GATD1 with a ratio of 1:2:1:2:4, respectively.

Its subcellular location is the cytoplasm. It localises to the early endosome. In terms of biological role, component of the FERRY complex (Five-subunit Endosomal Rab5 and RNA/ribosome intermediary). The FERRY complex directly interacts with mRNAs and RAB5A, and functions as a RAB5A effector involved in the localization and the distribution of specific mRNAs most likely by mediating their endosomal transport. The complex recruits mRNAs and ribosomes to early endosomes through direct mRNA-interaction. Plays a role in mast cell degranulation. The protein is FERRY endosomal RAB5 effector complex subunit 3 of Rattus norvegicus (Rat).